The chain runs to 133 residues: Small ribosomal subunit protein uS8 (133 aa).

This sequence belongs to the universal ribosomal protein uS8 family. In terms of assembly, part of the 30S ribosomal subunit. Contacts proteins S5 and S12.

Its function is as follows. One of the primary rRNA binding proteins, it binds directly to 16S rRNA central domain where it helps coordinate assembly of the platform of the 30S subunit. The chain is Small ribosomal subunit protein uS8 from Syntrophus aciditrophicus (strain SB).